Reading from the N-terminus, the 367-residue chain is Aldo-keto reductase AMT2 (367 aa).

D76 contacts NADP(+). Y81 acts as the Proton donor in catalysis. H173 lines the substrate pocket. Residues 203–204, Q229, 258–268, and 330–338 each bind NADP(+); these read SS, GPLAAGKLARP, and SSVERMDEV. The segment at 346-367 is disordered; that stretch reads LSDEEESRLEDPYKAQPPQGHS.

It belongs to the aldo/keto reductase family.

The protein operates within mycotoxin biosynthesis. Its function is as follows. Aldo-keto reductase; part of the gene clusters that mediate the biosynthesis of AM-toxins, host-selective toxins (HSTs) causing Alternaria blotch on apple, a worldwide distributed disease. AM-toxins are cyclic depsipeptides containing the 3 residues 2-hydroxy-isovaleric acid (2-HIV), dehydroalanine, L-alanine which are common for all 3 AM-toxins I to III. The fourth precursor is L-alpha-amino-methoxyphenyl-valeric acid (L-Amv) for AM-toxin I, L-alpha-amino-phenyl-valeric acid (L-Apv) for AM-toxin II, and L-alpha-amino-hydroxyphenyl-valeric acid (L-Ahv) for AM-toxin III. AM-toxins have two target sites for affecting susceptible apple cells; they cause invagination of the plasma membrane and electrolyte loss and chloroplast disorganization. The non-ribosomal peptide synthetase AMT1 contains 4 catalytic modules and is responsible for activation of each residue in AM-toxin. The aldo-keto reductase AMT2 catalyzes the conversion of 2-keto-isovaleric acid (2-KIV) to 2-hydroxy-isovaleric acid (2-HIV), one of the precursor residues incorporated by AMT1 during AM-toxin biosynthesis, by reduction of its ketone to an alcohol. The cytochrome P450 monooxygenase AMT3 and the thioesterase AMT4 are also important for AM-toxin production, but their exact function within the AM-toxin biosynthesis are not known yet. Up to 21 proteins (including AMT1 to AMT4) are predicted to be involved in AM-toxin biosynthesis since their expression ishighly up-regulated in AM-toxin-producing cultures. This is Aldo-keto reductase AMT2 from Alternaria alternata (Alternaria rot fungus).